The following is a 256-amino-acid chain: Small ribosomal subunit protein eS1 (256 aa).

The segment covering 1–18 (MAVGKNKRLSKGKKGIKK) has biased composition (basic residues). Residues 1–20 (MAVGKNKRLSKGKKGIKKRT) form a disordered region. Alanine 2 carries the post-translational modification N-acetylalanine; partial.

This sequence belongs to the eukaryotic ribosomal protein eS1 family. As to quaternary structure, component of the small ribosomal subunit. Mature ribosomes consist of a small (40S) and a large (60S) subunit. The 40S subunit contains about 33 different proteins and 1 molecule of RNA (18S). The 60S subunit contains about 49 different proteins and 3 molecules of RNA (25S, 5.8S and 5S).

It localises to the cytoplasm. This is Small ribosomal subunit protein eS1 (rps1) from Emericella nidulans (strain FGSC A4 / ATCC 38163 / CBS 112.46 / NRRL 194 / M139) (Aspergillus nidulans).